Reading from the N-terminus, the 292-residue chain is MGLGMWLRTGVLMAFLTGLLMAIGYVLGNETGMMFAFMFALVMNFFSYWYSDKIVLTWYRARILEEDEAPELYEIVRGLAQEAGIPTPKIAIVPTETPNAFATGRNPKNAVVAVTQGLLRILNRDELEGVIAHELSHIKNRDVLIQTLAAVMAGAIMMVARWAGWMLWLGGFGGRDRDRDASGALGAILLIVLAPIAAMLIQMAISRAREYLADETGAKISGKPWALARALEKIEHAVSMRPIKNGNPATAHMFIINPFRGVSFAELFSTHPPTQKRIERLRKIAENMGIAF.

2 helical membrane-spanning segments follow: residues 9–29 (TGVL…VLGN) and 31–51 (TGMM…YWYS). A Zn(2+)-binding site is contributed by His-133. Residue Glu-134 is part of the active site. Zn(2+) is bound at residue His-137. Helical transmembrane passes span 148–168 (LAAV…WMLW) and 185–205 (LGAI…QMAI). Position 210 (Glu-210) interacts with Zn(2+).

The protein belongs to the peptidase M48B family. The cofactor is Zn(2+).

The protein localises to the cell membrane. In Thermococcus sibiricus (strain DSM 12597 / MM 739), this protein is Protease HtpX homolog.